The sequence spans 338 residues: Glycerol-3-phosphate dehydrogenase [NAD(P)+] (338 aa).

Residues Ser13, Trp14, and Lys108 each coordinate NADPH. 3 residues coordinate sn-glycerol 3-phosphate: Lys108, Gly139, and Ser141. Residue Ala143 participates in NADPH binding. Residues Lys194, Asp247, Ser257, Arg258, and Asn259 each contribute to the sn-glycerol 3-phosphate site. Residue Lys194 is the Proton acceptor of the active site. Position 258 (Arg258) interacts with NADPH. Residues Val282 and Glu284 each contribute to the NADPH site.

It belongs to the NAD-dependent glycerol-3-phosphate dehydrogenase family.

The protein resides in the cytoplasm. It catalyses the reaction sn-glycerol 3-phosphate + NAD(+) = dihydroxyacetone phosphate + NADH + H(+). It carries out the reaction sn-glycerol 3-phosphate + NADP(+) = dihydroxyacetone phosphate + NADPH + H(+). The protein operates within membrane lipid metabolism; glycerophospholipid metabolism. Functionally, catalyzes the reduction of the glycolytic intermediate dihydroxyacetone phosphate (DHAP) to sn-glycerol 3-phosphate (G3P), the key precursor for phospholipid synthesis. This chain is Glycerol-3-phosphate dehydrogenase [NAD(P)+], found in Streptococcus pneumoniae (strain Hungary19A-6).